The primary structure comprises 127 residues: Putative membrane protein insertion efficiency factor (127 aa).

Residues 71–106 (DPPPPPRLHRAAAARMPRQRDADPRDTTRCSSTGAE) are disordered. Positions 88–98 (RQRDADPRDTT) are enriched in basic and acidic residues.

The protein belongs to the UPF0161 family.

It localises to the cell inner membrane. Its function is as follows. Could be involved in insertion of integral membrane proteins into the membrane. In Sorangium cellulosum (strain So ce56) (Polyangium cellulosum (strain So ce56)), this protein is Putative membrane protein insertion efficiency factor.